The following is a 637-amino-acid chain: Chaperone protein HtpG (637 aa).

The segment at 1–345 is a; substrate-binding; sequence MTAAQKETLG…SNDLPLNVSR (345 aa). The tract at residues 346-562 is b; the sequence is EILQDNKVTQ…DNDMSSQMQK (217 aa). Residues 563 to 637 form a c region; that stretch reads LMESVGQAAP…LNKLMLELSK (75 aa).

Belongs to the heat shock protein 90 family. In terms of assembly, homodimer.

It localises to the cytoplasm. Functionally, molecular chaperone. Has ATPase activity. The sequence is that of Chaperone protein HtpG from Pseudoalteromonas translucida (strain TAC 125).